A 1064-amino-acid polypeptide reads, in one-letter code: Bifunctional cytochrome P450/NADPH--P450 reductase ascE (1064 aa).

A cytochrome P450 region spans residues 1 to 484 (MTELIPGPKG…LHGGAKKGSK (484 aa)). Position 411 (Cys411) interacts with heme. Residues 485–1064 (IDGPSSGASL…ANRYVTEIFA (580 aa)) are NADPH-P-450 reductase. The 141-residue stretch at 504-644 (MTILYGSDSG…DFERWQDDQL (141 aa)) folds into the Flavodoxin-like domain. FMN-binding positions include 510 to 514 (SDSGT) and 588 to 620 (VYGC…KRIA). The region spanning 676-905 (VDADEATVQS…KPALRLFHPP (230 aa)) is the FAD-binding FR-type domain.

In the N-terminal section; belongs to the cytochrome P450 family. FAD is required as a cofactor. FMN serves as cofactor. It depends on heme as a cofactor.

The enzyme catalyses ilicicolin A + NADPH + O2 + H(+) = ilicicolin A epoxide + NADP(+) + H2O. It participates in secondary metabolite biosynthesis; terpenoid biosynthesis. Its function is as follows. Bifunctional cytochrome P450/NADPH--P450 reductase; part of the asc-1 gene cluster that mediates the biosynthesis both ascochlorin and ascofuranone, a strong inhibitor of cyanide-insensitive alternative oxidases and a promising drug candidate against African trypanosomiasis. The first step in the pathway is performed by the non-reducing polyketide synthase ascC that produces orsellinic acid by condensing acetyl-CoA with 3 malonyl-CoA units. Orsellinic acid is then prenylated by the prenyltransferase ascA to yield ilicicolinic acid B. Ilicicolinic acid B is further reduced to ilicicolin B by the reductase ascB. The halogenase ascD then chlorinates ilicicolin B to produce ilicicolin A which is converted to ilicicolin A epoxide by the cytochrome P450 monooxygenase ascE that catalyzes stereoselective epoxidation of the terminal double bond of the prenyl group. Ilicicolin A epoxide is the last common precursor for the biosynthesis of ascofuranone and ascochlorin. The terpene cyclase ascF produces a monocyclic terpene, and the cyclization reaction is proposed to be initiated by protonation of the terminal epoxide of ilicicolin A epoxide to generate a monocyclic tertiarycation, which is followed by a series of hydride and methyl shifts with abstraction of proton, leading to the formation of the (14S,15R,19R)-trimethylcyclohexanone ring structure of ilicicolin C, which is finally reduced to ascochlorin by the dehydrogenase ascG. On the other hand, ilicicolin A epoxide is hydroxylated by the cytochrome P450 monooxygenase ascH, and the resultant product is cyclized by the terpene cyclase ascI to ascofuranol via protonation-initiated epoxide ring opening, which facilitates the 6-endo-tet cyclization to form the tetrahy-drofuran ring. Finally, ascofuranol is oxidized into ascofuranone by ascJ. The polypeptide is Bifunctional cytochrome P450/NADPH--P450 reductase ascE (Acremonium egyptiacum (Oospora egyptiaca)).